A 447-amino-acid chain; its full sequence is Phospholipase A(1) LCAT3 (447 aa).

The Acyl-ester intermediate role is filled by Ser177. Residues Asp384 and His409 each act as charge relay system in the active site.

This sequence belongs to the AB hydrolase superfamily. Lipase family.

The protein resides in the microsome membrane. It carries out the reaction a 1,2-diacyl-sn-glycero-3-phosphocholine + H2O = a 2-acyl-sn-glycero-3-phosphocholine + a fatty acid + H(+). In terms of biological role, hydrolyzes the sn-1 acylester bond of phospholipids. Phosphatidylcholine, phosphatidylethanolamine and phosphatidic acid can be used as substrates. Weak activity with lysophosphatidylcholine and no activity with tripalmitoylglycerol and cholesteryl oleate. Seems to have a preference for unsaturated fatty acids at the sn-1 position. The chain is Phospholipase A(1) LCAT3 (LCAT3) from Arabidopsis thaliana (Mouse-ear cress).